A 574-amino-acid polypeptide reads, in one-letter code: uncharacterized protein (574 aa).

The next 11 membrane-spanning stretches (helical) occupy residues 14 to 34 (FFPT…LFFG), 54 to 74 (VVPL…LGIV), 124 to 144 (WLMA…SDTA), 205 to 225 (ICKC…TGTI), 253 to 273 (SWMA…WFIV), 323 to 343 (LVIF…VIPG), 350 to 370 (KGYV…FIWP), 403 to 423 (FPWS…AVRV), 441 to 461 (MPFF…TEFS), 485 to 505 (PLYF…LPMA), and 520 to 540 (MIDM…ITAI). N-linked (GlcNAc...) asparagine glycosylation is found at Asn-565 and Asn-569.

The protein belongs to the SLC13A/DASS transporter (TC 2.A.47) family. NADC subfamily.

It localises to the membrane. This is an uncharacterized protein from Caenorhabditis elegans.